We begin with the raw amino-acid sequence, 342 residues long: Nucleoid-associated protein SO_2177 (342 aa).

It belongs to the YejK family.

It localises to the cytoplasm. Its subcellular location is the nucleoid. The protein is Nucleoid-associated protein SO_2177 of Shewanella oneidensis (strain ATCC 700550 / JCM 31522 / CIP 106686 / LMG 19005 / NCIMB 14063 / MR-1).